The following is a 353-amino-acid chain: Methylthioribose-1-phosphate isomerase (353 aa).

Substrate-binding positions include 48-50, R94, and Q201; that span reads RGA. Residue D242 is the Proton donor of the active site. 252–253 contacts substrate; sequence NK.

It belongs to the eIF-2B alpha/beta/delta subunits family. MtnA subfamily.

It catalyses the reaction 5-(methylsulfanyl)-alpha-D-ribose 1-phosphate = 5-(methylsulfanyl)-D-ribulose 1-phosphate. The protein operates within amino-acid biosynthesis; L-methionine biosynthesis via salvage pathway; L-methionine from S-methyl-5-thio-alpha-D-ribose 1-phosphate: step 1/6. Functionally, catalyzes the interconversion of methylthioribose-1-phosphate (MTR-1-P) into methylthioribulose-1-phosphate (MTRu-1-P). The chain is Methylthioribose-1-phosphate isomerase from Roseiflexus sp. (strain RS-1).